Reading from the N-terminus, the 339-residue chain is Protein RecA (339 aa).

73–80 is a binding site for ATP; it reads GPESSGKT.

It belongs to the RecA family.

Its subcellular location is the cytoplasm. Its function is as follows. Can catalyze the hydrolysis of ATP in the presence of single-stranded DNA, the ATP-dependent uptake of single-stranded DNA by duplex DNA, and the ATP-dependent hybridization of homologous single-stranded DNAs. It interacts with LexA causing its activation and leading to its autocatalytic cleavage. The sequence is that of Protein RecA from Mycoplasmopsis pulmonis (strain UAB CTIP) (Mycoplasma pulmonis).